A 434-amino-acid chain; its full sequence is ATP-dependent protease ATPase subunit HslU (434 aa).

ATP is bound by residues valine 18, 60-65 (GVGKTE), aspartate 247, glutamate 312, and arginine 384.

It belongs to the ClpX chaperone family. HslU subfamily. A double ring-shaped homohexamer of HslV is capped on each side by a ring-shaped HslU homohexamer. The assembly of the HslU/HslV complex is dependent on binding of ATP.

The protein localises to the cytoplasm. In terms of biological role, ATPase subunit of a proteasome-like degradation complex; this subunit has chaperone activity. The binding of ATP and its subsequent hydrolysis by HslU are essential for unfolding of protein substrates subsequently hydrolyzed by HslV. HslU recognizes the N-terminal part of its protein substrates and unfolds these before they are guided to HslV for hydrolysis. The chain is ATP-dependent protease ATPase subunit HslU from Bradyrhizobium diazoefficiens (strain JCM 10833 / BCRC 13528 / IAM 13628 / NBRC 14792 / USDA 110).